A 274-amino-acid polypeptide reads, in one-letter code: MPFRSNNPITRDELLSRFFPQFHPVTTFNSGLSGGSFLIEHQGQRFVVRQPHDPDAPQSAFLRQYRALSQLPACIAPKPHLYLRDWMVVDYLPGAVKTYLPDTNELAGLLYYLHQQPRFGWRITLLPLLELYWQQSDPARRTVGWLRMLKRLRKAREPRPLRLSPLHMDVHAGNLVHSASGLKLIDWEYAGDGDIALELAAVWVENTEQHLQLVNDYATRAKIYPAQLWRQVRRWFPWLLMLKAGWFEYRWRQTGDQQFIRLADDTWRQLLIKQ.

The protein belongs to the thiamine kinase family.

The catalysed reaction is thiamine + ATP = thiamine phosphate + ADP + H(+). The protein operates within cofactor biosynthesis; thiamine diphosphate biosynthesis; thiamine phosphate from thiamine: step 1/1. Functionally, catalyzes the ATP-dependent phosphorylation of thiamine to thiamine phosphate. Is involved in thiamine salvage. This is Thiamine kinase from Escherichia coli O9:H4 (strain HS).